A 133-amino-acid polypeptide reads, in one-letter code: MVFSAREIKWGVAHIYSSYNNTIIHITDLTGAETVARTSGGMVVKADREKPSPYAAMLAASRAAQQAMDRGIMALHIKVRAPGGHGPKTPGPGAQAAIRALARAGFIIGRIEDVTPLPHDTTRRPGGRRGRRV.

This sequence belongs to the universal ribosomal protein uS11 family. Part of the 30S ribosomal subunit.

Its function is as follows. Located on the platform of the 30S subunit. The sequence is that of Small ribosomal subunit protein uS11 from Hyperthermus butylicus (strain DSM 5456 / JCM 9403 / PLM1-5).